The following is a 792-amino-acid chain: Receptor-like protein 54 (792 aa).

Residues 1–21 form the signal peptide; the sequence is MKSNLAVFFITCFFCCVFVTS. At 22-758 the chain is on the extracellular side; that stretch reads DSVYTLPFPF…PKQEHALNWK (737 aa). N-linked (GlcNAc...) asparagine glycans are attached at residues Asn-68 and Asn-107. LRR repeat units lie at residues 114–137, 139–162, 163–187, 189–209, 211–233, 235–258, 259–282, 283–302, 303–324, 325–349, 351–374, and 375–399; these read QHLR…GFGR, TYLE…ISNL, SRLT…SLTL, ENID…LFTM, FLVS…NYSA, SKLL…ISKL, ANLI…FLLF, KSLV…GTGS, ENLT…FIKD, LQRL…LWTL, SMLH…IILN, and SSIS…PYVN. Asn-161 carries N-linked (GlcNAc...) asparagine glycosylation. N-linked (GlcNAc...) asparagine glycosylation is present at Asn-230. N-linked (GlcNAc...) asparagine glycosylation is found at Asn-304 and Asn-314. N-linked (GlcNAc...) asparagine glycans are attached at residues Asn-356 and Asn-374. The LRR 13; degenerate repeat unit spans residues 400–418; it reads IMAASNNYFTGGIPLIFCK. LRR repeat units follow at residues 419–443, 444–470, 472–489, and 490–515; these read RYRL…LTNV, SLGL…RLVL, DVGH…LVNC, and TTLK…ALTR. N-linked (GlcNAc...) asparagine glycosylation is found at Asn-431, Asn-442, Asn-454, Asn-488, and Asn-503. The stretch at 516 to 536 is one LRR 18; degenerate repeat; sequence LEIIVLRSNRFHGPISSPEVS. LRR repeat units follow at residues 539–563, 614–637, 638–661, 662–685, and 687–709; these read FTAL…YFAN, DTYT…IGDL, KSLI…LAKL, KQLE…LREL, and FLGY…TQVG. Residues Asn-553 and Asn-563 are each glycosylated (N-linked (GlcNAc...) asparagine). An N-linked (GlcNAc...) asparagine glycan is attached at Asn-647. Asn-692 carries N-linked (GlcNAc...) asparagine glycosylation. A helical transmembrane segment spans residues 759-779; sequence AAAIGYGPGVLFGLAIGQAFA. At 780-792 the chain is on the cytoplasmic side; it reads RYKPVLFYKLFRL.

Belongs to the RLP family.

It localises to the cell membrane. In Arabidopsis thaliana (Mouse-ear cress), this protein is Receptor-like protein 54.